The primary structure comprises 883 residues: Phosphoenolpyruvate carboxylase (883 aa).

Active-site residues include His138 and Lys546.

The protein belongs to the PEPCase type 1 family. Mg(2+) is required as a cofactor.

The catalysed reaction is oxaloacetate + phosphate = phosphoenolpyruvate + hydrogencarbonate. Functionally, forms oxaloacetate, a four-carbon dicarboxylic acid source for the tricarboxylic acid cycle. The protein is Phosphoenolpyruvate carboxylase of Salmonella gallinarum (strain 287/91 / NCTC 13346).